The following is a 115-amino-acid chain: NADH-ubiquinone oxidoreductase chain 3 (115 aa).

3 helical membrane passes run I4–L24, F55–I75, and T86–W106.

This sequence belongs to the complex I subunit 3 family. In terms of assembly, core subunit of respiratory chain NADH dehydrogenase (Complex I) which is composed of 45 different subunits. Interacts with TMEM186. Interacts with TMEM242.

It localises to the mitochondrion inner membrane. The catalysed reaction is a ubiquinone + NADH + 5 H(+)(in) = a ubiquinol + NAD(+) + 4 H(+)(out). Its function is as follows. Core subunit of the mitochondrial membrane respiratory chain NADH dehydrogenase (Complex I) which catalyzes electron transfer from NADH through the respiratory chain, using ubiquinone as an electron acceptor. Essential for the catalytic activity of complex I. The polypeptide is NADH-ubiquinone oxidoreductase chain 3 (Baiomys taylori (Northern pygmy mouse)).